The sequence spans 404 residues: tRNA pseudouridine synthase D (404 aa).

D79 acts as the Nucleophile in catalysis. Positions 154-364 (GVPNRFGEQR…MEGERRPLRV (211 aa)) constitute a TRUD domain.

This sequence belongs to the pseudouridine synthase TruD family.

It carries out the reaction uridine(13) in tRNA = pseudouridine(13) in tRNA. In terms of biological role, responsible for synthesis of pseudouridine from uracil-13 in transfer RNAs. The sequence is that of tRNA pseudouridine synthase D from Geobacter metallireducens (strain ATCC 53774 / DSM 7210 / GS-15).